Consider the following 120-residue polypeptide: Ribonuclease P protein component 4 (120 aa).

Zn(2+) is bound by residues Cys-68, Cys-71, Cys-97, and Cys-100.

The protein belongs to the eukaryotic/archaeal RNase P protein component 4 family. In terms of assembly, consists of a catalytic RNA component and at least 5 protein subunits. Forms a heterodimeric subcomplex with Rnp1. Reconstituted enzyme missing individual protein subunits is suboptimally active, showing each subunit contributes to optimization of activity. Requires Zn(2+) as cofactor.

The protein localises to the cytoplasm. The catalysed reaction is Endonucleolytic cleavage of RNA, removing 5'-extranucleotides from tRNA precursor.. Functionally, part of ribonuclease P, a protein complex that generates mature tRNA molecules by cleaving their 5'-ends. Binds RNase P RNA. This Pyrococcus horikoshii (strain ATCC 700860 / DSM 12428 / JCM 9974 / NBRC 100139 / OT-3) protein is Ribonuclease P protein component 4.